A 427-amino-acid chain; its full sequence is Enolase (427 aa).

Gln162 lines the (2R)-2-phosphoglycerate pocket. The active-site Proton donor is Glu204. 3 residues coordinate Mg(2+): Asp241, Glu284, and Asp311. Lys336, Arg365, Ser366, and Lys387 together coordinate (2R)-2-phosphoglycerate. The Proton acceptor role is filled by Lys336.

The protein belongs to the enolase family. Requires Mg(2+) as cofactor.

Its subcellular location is the cytoplasm. The protein resides in the secreted. The protein localises to the cell surface. It catalyses the reaction (2R)-2-phosphoglycerate = phosphoenolpyruvate + H2O. It participates in carbohydrate degradation; glycolysis; pyruvate from D-glyceraldehyde 3-phosphate: step 4/5. Functionally, catalyzes the reversible conversion of 2-phosphoglycerate (2-PG) into phosphoenolpyruvate (PEP). It is essential for the degradation of carbohydrates via glycolysis. This is Enolase from Natranaerobius thermophilus (strain ATCC BAA-1301 / DSM 18059 / JW/NM-WN-LF).